The chain runs to 163 residues: Ribonuclease H (163 aa).

The region spanning 4 to 146 is the RNase H type-1 domain; it reads SPKKVLIYTD…CDRLAVRASQ (143 aa). Residues Asp13, Glu51, Asp73, and Asp138 each coordinate Mg(2+).

The protein belongs to the RNase H family. Monomer. It depends on Mg(2+) as a cofactor.

The protein localises to the cytoplasm. It catalyses the reaction Endonucleolytic cleavage to 5'-phosphomonoester.. Functionally, endonuclease that specifically degrades the RNA of RNA-DNA hybrids. This is Ribonuclease H from Rippkaea orientalis (strain PCC 8801 / RF-1) (Cyanothece sp. (strain PCC 8801)).